A 415-amino-acid chain; its full sequence is MTNKIIIPTTGDKITFIDGKLSVPNNPIIPYIEGDGIGVDVTPPMLKVVNAAVAKAYGGDRKIEWLEVYAGEKATKMYDSETWLPEETLNILQEYKVSIKGPLTTPVGGGMSSLNVAIRQMLDLYVCQRPVQWFTGVPSPVKRPSEVDMVIFRENTEDIYAGIEYKAGSDKAKSVIKFLIEEMGASNIRFTENCGIGIKPVSKEGSQRLVRQAIQYAIDNNKDSVTLVHKGNIMKFTEGAFKDWGYELAIEEFGASLLHGGPWCSLKNPNTGKEIIIKDVIADAMLQQVLLRPAEYSVIATLNLNGDYLSDALAAQVGGIGIAPGANLGDEVAVFEATHGTAPKYAGKNKVNPGSVILSAEMMLRHMGWLEADLLLKGMSGAIQAKTVTYDFERLMDDATLVSCSAFGDCIIDHM.

Thr-104 provides a ligand contact to NADP(+). Ser-113, Asn-115, Arg-119, Arg-129, and Arg-153 together coordinate D-threo-isocitrate. Residue Asp-307 participates in Mg(2+) binding. NADP(+) contacts are provided by residues His-339–Tyr-345, Asn-352, Tyr-390, and Arg-394.

It belongs to the isocitrate and isopropylmalate dehydrogenases family. In terms of assembly, homodimer. The cofactor is Mg(2+). Requires Mn(2+) as cofactor.

It catalyses the reaction D-threo-isocitrate + NADP(+) = 2-oxoglutarate + CO2 + NADPH. In terms of biological role, catalyzes the oxidative decarboxylation of isocitrate to 2-oxoglutarate and carbon dioxide with the concomitant reduction of NADP(+). This chain is Isocitrate dehydrogenase [NADP] 1, found in Colwellia maris.